A 306-amino-acid chain; its full sequence is Lipoyl synthase (306 aa).

Positions 41, 46, 52, 68, 72, 75, and 281 each coordinate [4Fe-4S] cluster. A Radical SAM core domain is found at 54-270 (GARRTATFMI…RKVAMDKGFK (217 aa)). Residues 283 to 306 (HADEQVNEAAKEKHRLGEEKLQQN) are disordered.

Belongs to the radical SAM superfamily. Lipoyl synthase family. It depends on [4Fe-4S] cluster as a cofactor.

It localises to the cytoplasm. It carries out the reaction [[Fe-S] cluster scaffold protein carrying a second [4Fe-4S](2+) cluster] + N(6)-octanoyl-L-lysyl-[protein] + 2 oxidized [2Fe-2S]-[ferredoxin] + 2 S-adenosyl-L-methionine + 4 H(+) = [[Fe-S] cluster scaffold protein] + N(6)-[(R)-dihydrolipoyl]-L-lysyl-[protein] + 4 Fe(3+) + 2 hydrogen sulfide + 2 5'-deoxyadenosine + 2 L-methionine + 2 reduced [2Fe-2S]-[ferredoxin]. It participates in protein modification; protein lipoylation via endogenous pathway; protein N(6)-(lipoyl)lysine from octanoyl-[acyl-carrier-protein]. Catalyzes the radical-mediated insertion of two sulfur atoms into the C-6 and C-8 positions of the octanoyl moiety bound to the lipoyl domains of lipoate-dependent enzymes, thereby converting the octanoylated domains into lipoylated derivatives. The polypeptide is Lipoyl synthase (Staphylococcus haemolyticus (strain JCSC1435)).